The chain runs to 354 residues: UDP-N-acetylglucosamine--N-acetylmuramyl-(pentapeptide) pyrophosphoryl-undecaprenol N-acetylglucosamine transferase (354 aa).

UDP-N-acetyl-alpha-D-glucosamine is bound by residues 13–15, asparagine 125, serine 189, isoleucine 242, 261–266, and glutamine 286; these read SGG and ALTVSE.

This sequence belongs to the glycosyltransferase 28 family. MurG subfamily.

The protein resides in the cell inner membrane. The catalysed reaction is di-trans,octa-cis-undecaprenyl diphospho-N-acetyl-alpha-D-muramoyl-L-alanyl-D-glutamyl-meso-2,6-diaminopimeloyl-D-alanyl-D-alanine + UDP-N-acetyl-alpha-D-glucosamine = di-trans,octa-cis-undecaprenyl diphospho-[N-acetyl-alpha-D-glucosaminyl-(1-&gt;4)]-N-acetyl-alpha-D-muramoyl-L-alanyl-D-glutamyl-meso-2,6-diaminopimeloyl-D-alanyl-D-alanine + UDP + H(+). It participates in cell wall biogenesis; peptidoglycan biosynthesis. Cell wall formation. Catalyzes the transfer of a GlcNAc subunit on undecaprenyl-pyrophosphoryl-MurNAc-pentapeptide (lipid intermediate I) to form undecaprenyl-pyrophosphoryl-MurNAc-(pentapeptide)GlcNAc (lipid intermediate II). This Buchnera aphidicola subsp. Acyrthosiphon pisum (strain 5A) protein is UDP-N-acetylglucosamine--N-acetylmuramyl-(pentapeptide) pyrophosphoryl-undecaprenol N-acetylglucosamine transferase.